The chain runs to 103 residues: Potassium voltage-gated channel subfamily E member 3 (103 aa).

N-linked (GlcNAc...) asparagine glycosylation is found at N5, N22, and N41. The segment at 30–52 (LCRPGPGPGPDNQTEDRRASLPG) is disordered. Residues 57-77 (SYMYILFVMFLFAVTVGSLIL) traverse the membrane as a helical segment. An interaction with KCNQ1 region spans residues 68–79 (FAVTVGSLILGY). Over 78–103 (GYTRSRKVDKRSDPYHVYIKNRVSMI) the chain is Cytoplasmic.

The protein belongs to the potassium channel KCNE family. Interacts with KCNB1. Interacts with KCNC2. Associates with KCNC4/Kv3.4. Interacts with KCNQ1; associates with a KCNQ1:KCNE3 stoichiometry of 4:4; produces a current with nearly instantaneous activation with a linear current-voltage relationship and alters membrane raft localization; affects KCNQ1 structure and gating properties.

It localises to the cell membrane. Its subcellular location is the cytoplasm. It is found in the perikaryon. The protein localises to the cell projection. The protein resides in the dendrite. It localises to the membrane raft. Its function is as follows. Ancillary protein that functions as a regulatory subunit of the voltage-gated potassium (Kv) channel complex composed of pore-forming and potassium-conducting alpha subunits and of regulatory beta subunits. KCNE3 beta subunit modulates the gating kinetics and enhances stability of the channel complex. Alters the gating of the delayed rectifier Kv channel containing KCNB1 alpha subunit. Associates with KCNC4/Kv3.4 alpha subunit to form the subthreshold Kv channel in skeletal muscle and to establish the resting membrane potential (RMP) in muscle cells. Association with KCNQ1/KCLQT1 alpha subunit may form the intestinal cAMP-stimulated potassium channel involved in chloride secretion that produces a current with nearly instantaneous activation with a linear current-voltage relationship. The sequence is that of Potassium voltage-gated channel subfamily E member 3 from Mus musculus (Mouse).